A 494-amino-acid polypeptide reads, in one-letter code: PIGF/3-ketodihydrosphingosine reductase fusion protein (494 aa).

The NADPH site is built by Gly-20, Ser-22, and Gly-24. A GXSXG motif is present at residues 20–24; it reads GGSQG. Leu-25 contacts NADP(+). The NADPH site is built by Arg-45 and Lys-49. Val-54 is a binding site for NADP(+). NADPH is bound by residues Asp-74 and Leu-75. Residues 148-168 traverse the membrane as a helical segment; it reads ILLVGSLLSSLPIIGYSAYSP. The NADP(+) site is built by Tyr-166, Lys-170, and Ile-199. Residue Tyr-166 is the Proton acceptor of the active site. Residue Lys-170 is the Lowers pKa of active site Tyr of the active site. A run of 6 helical transmembrane segments spans residues 264–284, 312–332, 370–390, 402–422, 444–464, and 473–493; these read HDNPILEYLFALVSLLAWPFY, IFTLLLTFTQLTIFYLSLNCL, LAGAASMLIGSLLISFILVAF, YFCALTLSVFTVYPLASTLAF, LRSWGPIIGAWFGAFPIPLDW, and ITIVIGAFLGYAFAAIVGEIL.

The protein in the N-terminal section; belongs to the short-chain dehydrogenases/reductases (SDR) family. This sequence in the C-terminal section; belongs to the PIGF family.

It localises to the endoplasmic reticulum membrane. The catalysed reaction is sphinganine + NADP(+) = 3-oxosphinganine + NADPH + H(+). It participates in glycolipid biosynthesis; glycosylphosphatidylinositol-anchor biosynthesis. Its pathway is lipid metabolism; sphingolipid metabolism. Its function is as follows. Acts in the GPI biosynthetic pathway between GlcNAc-PI synthesis and GPI transfer to protein. Required for the formation of complete GPI precursors CP1 and CP2. Catalyzes the reduction of 3'-oxosphinganine (3-ketodihydrosphingosine/KDS) to sphinganine (dihydrosphingosine/DHS), the second step of de novo sphingolipid biosynthesis. The sequence is that of PIGF/3-ketodihydrosphingosine reductase fusion protein from Schizosaccharomyces pombe (strain 972 / ATCC 24843) (Fission yeast).